Reading from the N-terminus, the 136-residue chain is Large ribosomal subunit protein eL27B (136 aa).

This sequence belongs to the eukaryotic ribosomal protein eL27 family. As to quaternary structure, component of the large ribosomal subunit (LSU). Mature yeast ribosomes consist of a small (40S) and a large (60S) subunit. The 40S small subunit contains 1 molecule of ribosomal RNA (18S rRNA) and 33 different proteins (encoded by 57 genes). The large 60S subunit contains 3 rRNA molecules (25S, 5.8S and 5S rRNA) and 46 different proteins (encoded by 81 genes).

It is found in the cytoplasm. Functionally, component of the ribosome, a large ribonucleoprotein complex responsible for the synthesis of proteins in the cell. The small ribosomal subunit (SSU) binds messenger RNAs (mRNAs) and translates the encoded message by selecting cognate aminoacyl-transfer RNA (tRNA) molecules. The large subunit (LSU) contains the ribosomal catalytic site termed the peptidyl transferase center (PTC), which catalyzes the formation of peptide bonds, thereby polymerizing the amino acids delivered by tRNAs into a polypeptide chain. The nascent polypeptides leave the ribosome through a tunnel in the LSU and interact with protein factors that function in enzymatic processing, targeting, and the membrane insertion of nascent chains at the exit of the ribosomal tunnel. The chain is Large ribosomal subunit protein eL27B from Saccharomyces cerevisiae (strain ATCC 204508 / S288c) (Baker's yeast).